Here is a 456-residue protein sequence, read N- to C-terminus: MDVCLSYSYNMDDEIAKFIRRVNPPRVVIDNEVCKDVTVIKVDSANKHGILLEVVQVLTELNLTIKKAYISSDGGWFMDVFNVTDQDGNKVTDEIVLEYIRKSLGPDESSCFSPSMRSTIGVKQSVDYTVVELTGTDRPGLLSELCAVLMDLQCNVVNAEIWTHRAKAAAVLQVTDEETCSAITDPERLSKIRKLLGYVLTGGSSGRRFREPKTTVSSALNETHTDRKLHQLMFADRDYDEWENNVDDEDKCGRVIPDVDVSNLHDLDYSIVMIKCKDRPKLLFDTVFTLTDMNYVVSHASIDAEGPQAYQEYYIRHTDGSPVKSEAERQRVIKCLKAAIQRRVSEGLKLELCTSDRVGLLSDVTRIFRENSLTVTRAEVKTKGDKALNTFYVRDASGYQVDTKTIESIRQVIGQTILQVKGGNTDAKPSPQDSPTGFLFGVFKSRSFVNFGLIRS.

ACT domains follow at residues 39 to 115, 130 to 207, 271 to 347, and 349 to 432; these read VIKV…FSPS, VVEL…SSGR, IVMI…VSEG, and KLEL…PSPQ.

As to expression, expressed in stems and siliques.

May bind amino acids. This Arabidopsis thaliana (Mouse-ear cress) protein is ACT domain-containing protein ACR5.